The following is a 347-amino-acid chain: tRNA pseudouridine synthase D (347 aa).

The Nucleophile role is filled by aspartate 81. One can recognise a TRUD domain in the interval 158–304 (GVPNYFGNQR…MRHDRRAIAL (147 aa)).

Belongs to the pseudouridine synthase TruD family.

It catalyses the reaction uridine(13) in tRNA = pseudouridine(13) in tRNA. Its function is as follows. Responsible for synthesis of pseudouridine from uracil-13 in transfer RNAs. The chain is tRNA pseudouridine synthase D from Vibrio vulnificus (strain YJ016).